A 416-amino-acid polypeptide reads, in one-letter code: Tyrosine-protein phosphatase non-receptor type 2 (416 aa).

Residues 5–275 (IEREFEELDA…RFSYMAIIEG (271 aa)) enclose the Tyrosine-protein phosphatase domain. Tyrosine 22 bears the Phosphotyrosine mark. Position 52 is a phosphoserine (serine 52). Tyrosine 68 carries the post-translational modification Phosphotyrosine. Residues aspartate 182, 216 to 222 (CSAGIGR), and glutamine 260 each bind substrate. The active-site Phosphocysteine intermediate is the cysteine 216. Residue cysteine 216 is modified to S-nitrosocysteine. Phosphoserine occurs at positions 293, 298, 304, 320, and 339. Positions 341 to 410 (ESILRKRIRE…WTLLFQLNVL (70 aa)) are endoplasmic reticulum location. The tract at residues 371 to 410 (ERKRKRWLYWQPILTKMGFVSVILVGALVGWTLLFQLNVL) is may mediate interaction with STX17.

This sequence belongs to the protein-tyrosine phosphatase family. Non-receptor class 1 subfamily. As to quaternary structure, interacts with RMDN3. Interacts with TMED9. Interacts with STX17; dephosphorylates STX17. Interacts with ITGA1 (via cytoplasmic domain); activates the phosphatase activity towards EGFR. Interacts with TRAF2; probably involved in tumor necrosis factor-mediated signaling. Interacts with MET. Interacts with FAM220A and STAT3; interaction with FAM220A promotes interaction of PTPN2 with transcriptional activator STAT3, leading to dephosphorylation of STAT3 by PTPN2 and negative regulation of STAT3 transcriptional activator activity. Specifically phosphorylated in a cell cycle-dependent manner by cyclin-dependent kinases CDK1 and CDK2. Probably activated through phosphorylation by PKR. As to expression, does not show tissue- or cell-type specificity although levels of transcription show variability. Macrophages showed higher levels of expression than lymphocytes.

Its subcellular location is the cytoplasm. It is found in the endoplasmic reticulum-Golgi intermediate compartment. It localises to the endoplasmic reticulum. The protein resides in the nucleus membrane. The protein localises to the nucleus. Its subcellular location is the cell membrane. It carries out the reaction O-phospho-L-tyrosyl-[protein] + H2O = L-tyrosyl-[protein] + phosphate. Its function is as follows. Non-receptor type tyrosine-specific phosphatase that dephosphorylates receptor protein tyrosine kinases including INSR, EGFR, CSF1R, PDGFR. Also dephosphorylates non-receptor protein tyrosine kinases like JAK1, JAK2, JAK3, Src family kinases, STAT1, STAT3 and STAT6 either in the nucleus or the cytoplasm. Negatively regulates numerous signaling pathways and biological processes like hematopoiesis, inflammatory response, cell proliferation and differentiation, and glucose homeostasis. Plays a multifaceted and important role in the development of the immune system. Functions in T-cell receptor signaling through dephosphorylation of FYN and LCK to control T-cells differentiation and activation. Dephosphorylates CSF1R, negatively regulating its downstream signaling and macrophage differentiation. Negatively regulates cytokine (IL2/interleukin-2 and interferon)-mediated signaling through dephosphorylation of the cytoplasmic kinases JAK1, JAK3 and their substrate STAT1, that propagate signaling downstream of the cytokine receptors. Also regulates the IL6/interleukin-6 and IL4/interleukin-4 cytokine signaling through dephosphorylation of STAT3 and STAT6 respectively. In addition to the immune system, it is involved in anchorage-dependent, negative regulation of EGF-stimulated cell growth. Activated by the integrin ITGA1/ITGB1, it dephosphorylates EGFR and negatively regulates EGF signaling. Dephosphorylates PDGFRB and negatively regulates platelet-derived growth factor receptor-beta signaling pathway and therefore cell proliferation. Negatively regulates tumor necrosis factor-mediated signaling downstream via MAPK through SRC dephosphorylation. May also regulate the hepatocyte growth factor receptor signaling pathway through dephosphorylation of the hepatocyte growth factor receptor MET. Also plays an important role in glucose homeostasis. For instance, negatively regulates the insulin receptor signaling pathway through the dephosphorylation of INSR and control gluconeogenesis and liver glucose production through negative regulation of the IL6 signaling pathways. May also bind DNA. This is Tyrosine-protein phosphatase non-receptor type 2 (Ptpn2) from Rattus norvegicus (Rat).